We begin with the raw amino-acid sequence, 386 residues long: Synaptotagmin-5 (386 aa).

The segment covering 1 to 16 (MFPEPPTLGSPAPKTP) has biased composition (pro residues). The interval 1–21 (MFPEPPTLGSPAPKTPPDSSR) is disordered. Residues 1–24 (MFPEPPTLGSPAPKTPPDSSRIRQ) are Vesicular-facing. The helical transmembrane segment at 25 to 45 (GAVPAWVLATIVLGSGLLVFS) threads the bilayer. The Cytoplasmic portion of the chain corresponds to 46 to 386 (SCFCLYRKRC…PDRARPIPAP (341 aa)). C2 domains are found at residues 108–227 (QLGR…QAWR) and 239–372 (KLGD…AQWH). 12 residues coordinate Ca(2+): Leu138, Asp139, Asp145, Asp197, Phe198, Asp199, Ser202, Asp205, Asp270, Asp276, Asp330, and Asp332.

It belongs to the synaptotagmin family. Homodimer. Interacts with both alpha- and beta-tubulin. Ca(2+) serves as cofactor.

It is found in the cytoplasmic vesicle. Its subcellular location is the secretory vesicle. The protein localises to the synaptic vesicle membrane. The protein resides in the recycling endosome membrane. May be involved in Ca(2+)-dependent exocytosis of secretory vesicles through Ca(2+) and phospholipid binding to the C2 domain or may serve as Ca(2+) sensors in the process of vesicular trafficking and exocytosis. Regulates the Ca(2+)-dependent secretion of norepinephrine in PC12 cells. Required for export from the endocytic recycling compartment to the cell surface. The protein is Synaptotagmin-5 (Syt5) of Mus musculus (Mouse).